The chain runs to 62 residues: Sauvatide (62 aa).

Positions 1-24 are cleaved as a signal peptide; that stretch reads MDILKKSLFLILFLGLVSISFCDG. A propeptide spanning residues 25 to 46 is cleaved from the precursor; sequence EKRQDDDEANESEEKKEIHEVE. Lys58 is modified (lysine amide).

Expressed by the skin glands.

The protein localises to the secreted. Functionally, induces contraction of smooth muscle in isolated rat urinary bladder with an EC(50) value of 2.2nM. In Phyllomedusa sauvagei (Sauvage's leaf frog), this protein is Sauvatide.